A 75-amino-acid chain; its full sequence is Putative membrane protein insertion efficiency factor (75 aa).

The protein belongs to the UPF0161 family.

The protein localises to the cell membrane. Could be involved in insertion of integral membrane proteins into the membrane. This Bacillus cytotoxicus (strain DSM 22905 / CIP 110041 / 391-98 / NVH 391-98) protein is Putative membrane protein insertion efficiency factor.